Consider the following 863-residue polypeptide: DNA mismatch repair protein MutS (863 aa).

607–614 (GPNMAGKS) is an ATP binding site.

Belongs to the DNA mismatch repair MutS family.

Functionally, this protein is involved in the repair of mismatches in DNA. It is possible that it carries out the mismatch recognition step. This protein has a weak ATPase activity. This Caldicellulosiruptor bescii (strain ATCC BAA-1888 / DSM 6725 / KCTC 15123 / Z-1320) (Anaerocellum thermophilum) protein is DNA mismatch repair protein MutS.